The chain runs to 704 residues: Protein NPG1 (704 aa).

8 TPR repeats span residues asparagine 24–phenylalanine 57, glutamate 58–isoleucine 90, serine 177–leucine 210, isoleucine 309–proline 342, proline 430–serine 463, phenylalanine 555–serine 588, alanine 589–serine 622, and arginine 662–aspartate 695.

As to quaternary structure, interacts with calmodulin in a calcium-dependent manner. In terms of tissue distribution, expressed only in pollen and in pollen tubes.

Its function is as follows. Calmodulin-binding protein essential for pollen germination, but not necessary for microsporogenesis or gametogenesis. The chain is Protein NPG1 from Arabidopsis thaliana (Mouse-ear cress).